Consider the following 562-residue polypeptide: Flagella accessory protein J (562 aa).

9 helical membrane passes run 32–52, 53–73, 199–219, 225–245, 273–293, 302–322, 446–466, 498–518, and 527–547; these read IVLI…IYLL, LPII…DSQK, VSAM…PFLL, FMAT…VVVI, IISV…KYIV, PYMI…FVAL, FVGV…ASLG, VVEY…AILI, and FVSL…AYIT.

To M.voltae FlaJ. It to M.jannaschii MJ1286.

Its subcellular location is the cell membrane. The protein resides in the archaeal flagellum. The polypeptide is Flagella accessory protein J (flaJ) (Methanocaldococcus jannaschii (strain ATCC 43067 / DSM 2661 / JAL-1 / JCM 10045 / NBRC 100440) (Methanococcus jannaschii)).